We begin with the raw amino-acid sequence, 151 residues long: Alpha-latroinsectotoxin-Lh1a (151 aa).

8 ANK repeats span residues 21–37 (TDVTQTLIDITEIDLNA), 41–52 (ILIRNTNAVINI), 56–80 (VGLTPLHLATLQNNLSVSKGAYLND), 84–104 (NGMTPLHYAAMTGNLEMVDFL), 105–116 (KWTPLHLAILFK), 117–125 (QLVIELLAK), 126–146 (TFFDLAIENGRLNIVAFAVEK), and 147–151 (YIAAR).

It belongs to the cationic peptide 01 (latrotoxin) family. 02 (alpha-latroinsectotoxin) subfamily. Homotetramer in membranes. In terms of tissue distribution, expressed by the venom gland.

The protein localises to the secreted. It is found in the target cell membrane. Its function is as follows. Insecticidal presynaptic neurotoxin that induces massive neurotransmitter release at insect (but not vertebrate) neuromuscular junctions. Native toxin forms cation-permeable pores (with high permeability to calcium) in lipid membranes locust muscle membrane and artificial lipid bilayers. May bind to insect neurexin-1 homolog, insect adhesion G protein-coupled receptor L1 homolog, and insect receptor-type tyrosine-protein phosphatase S homolog, and induces neurotransmitter exocytosis both by forming tetrameric pores in membranes and signaling via G protein-coupled receptor. Oligomerization is a process independent of divalent cations. The toxin forms channels with 0.55-0.58 nm entrance diameter and a relatively small conductance in planar phospholipid membranes. This is Alpha-latroinsectotoxin-Lh1a from Latrodectus hasselti (Redback spider).